The primary structure comprises 573 residues: Methionine--tRNA ligase (573 aa).

The 'HIGH' region signature appears at 10-20; the sequence is PYVNSVPHLGN. Zn(2+)-binding residues include cysteine 143, cysteine 146, cysteine 156, and cysteine 159. Positions 333–337 match the 'KMSKS' region motif; that stretch reads KFSKS. Lysine 336 is a binding site for ATP.

The protein belongs to the class-I aminoacyl-tRNA synthetase family. MetG type 1 subfamily. Zn(2+) is required as a cofactor.

Its subcellular location is the cytoplasm. It catalyses the reaction tRNA(Met) + L-methionine + ATP = L-methionyl-tRNA(Met) + AMP + diphosphate. Functionally, is required not only for elongation of protein synthesis but also for the initiation of all mRNA translation through initiator tRNA(fMet) aminoacylation. The chain is Methionine--tRNA ligase from Saccharolobus solfataricus (strain ATCC 35092 / DSM 1617 / JCM 11322 / P2) (Sulfolobus solfataricus).